A 152-amino-acid chain; its full sequence is Succinate dehydrogenase [ubiquinone] cytochrome b small subunit A, mitochondrial (152 aa).

A mitochondrion-targeting transit peptide spans 1–21 (MVTVLRLSSLCRANRASAFKS). Topologically, residues 22–56 (LLIRPVPCLSQDLHTVQTSQIHTSQNHHAASKAAS) are mitochondrial matrix. Residues 57–78 (LHWTSERALSVALLGLLPAAYL) form a helical membrane-spanning segment. Residues 79–83 (YPGAA) lie on the Mitochondrial intermembrane side of the membrane. The helical transmembrane segment at 84–104 (VDYSLAAALTLHGHWGLGQVV) threads the bilayer. H95 contacts heme b. The Mitochondrial matrix portion of the chain corresponds to 105–113 (TDYVHGDAK). A ubiquinone is bound at residue Y107. Residues 114–135 (IKLANTSLFALSALTFAGLCYF) form a helical membrane-spanning segment. Residues 136–152 (NYHDVGICKAVAMLWSL) lie on the Mitochondrial intermembrane side of the membrane.

The protein belongs to the CybS family. Component of complex II composed of four subunits: the flavoprotein (FP) SDHA, iron-sulfur protein (IP) SDHB, and a cytochrome b560 composed of SDHC and SDHD.

Its subcellular location is the mitochondrion inner membrane. Its pathway is carbohydrate metabolism; tricarboxylic acid cycle. Its function is as follows. Membrane-anchoring subunit of succinate dehydrogenase (SDH) that is involved in complex II of the mitochondrial electron transport chain and is responsible for transferring electrons from succinate to ubiquinone (coenzyme Q). SDH also oxidizes malate to the non-canonical enol form of oxaloacetate, enol-oxaloacetate. Enol-oxaloacetate, which is a potent inhibitor of the succinate dehydrogenase activity, is further isomerized into keto-oxaloacetate. In Xenopus laevis (African clawed frog), this protein is Succinate dehydrogenase [ubiquinone] cytochrome b small subunit A, mitochondrial (sdhd-a).